Reading from the N-terminus, the 347-residue chain is Probable E3 ubiquitin-protein ligase DTX3 (347 aa).

A disordered region spans residues 113–157; sequence EHPEMHRAGPPPLRAAPLLPPGARGLPPPPPPLPPPLPPRLREEA. Pro residues predominate over residues 121 to 151; the sequence is GPPPLRAAPLLPPGARGLPPPPPPLPPPLPP. The RING-type zinc-finger motif lies at 164 to 205; that stretch reads CPICLGEIQNAKTLEKCRHSFCEGCITRALQVKKACPMCGRF.

This sequence belongs to the Deltex family. Homodimer. May form a heterodimers with other members of the Deltex family. Interacts with NOTCH1.

It localises to the cytoplasm. The catalysed reaction is S-ubiquitinyl-[E2 ubiquitin-conjugating enzyme]-L-cysteine + [acceptor protein]-L-lysine = [E2 ubiquitin-conjugating enzyme]-L-cysteine + N(6)-ubiquitinyl-[acceptor protein]-L-lysine.. The protein operates within protein modification; protein ubiquitination. Functionally, regulator of Notch signaling, a signaling pathway involved in cell-cell communications that regulates a broad spectrum of cell-fate determinations. Probably acts both as a positive and negative regulator of Notch, depending on the developmental and cell context. Functions as an ubiquitin ligase protein in vitro, suggesting that it may regulate the Notch pathway via some ubiquitin ligase activity. The sequence is that of Probable E3 ubiquitin-protein ligase DTX3 (DTX3) from Homo sapiens (Human).